The chain runs to 384 residues: Probable peptidoglycan glycosyltransferase FtsW (384 aa).

At 1 to 19 the chain is on the cytoplasmic side; that stretch reads MAAVWRWFVPERPSFYDRG. The helical transmembrane segment at 20-40 threads the bilayer; that stretch reads LLALTFSLMGIGLMMVASASI. Residues 41–54 lie on the Periplasmic side of the membrane; sequence KEGPGGDMFYFTKR. A helical membrane pass occupies residues 55-75; it reads HLIFLFVCLGIGVGTLYLPLE. Residues 76–83 lie on the Cytoplasmic side of the membrane; the sequence is RWREWSGR. A helical transmembrane segment spans residues 84–104; sequence LLVGALGLLFAVLAVGRTVNG. At 105–110 the chain is on the periplasmic side; that stretch reads AKRWIG. The helical transmembrane segment at 111–131 threads the bilayer; the sequence is FGFFNIQPAELAKLALIVFIA. Topologically, residues 132–143 are cytoplasmic; it reads SYLVRRSDEVRG. The chain crosses the membrane as a helical span at residues 144-164; it reads NIAGFVKPLAVVFLLAIMLLA. Residues 165–166 are Periplasmic-facing; that stretch reads QP. The helical transmembrane segment at 167 to 187 threads the bilayer; sequence DLGSVVVLFVCTFGLLFIGGA. Residue K188 is a topological domain, cytoplasmic. The helical transmembrane segment at 189–209 threads the bilayer; sequence LVQFIAIIVAGLSALAGLIIY. Residues 210–267 are Periplasmic-facing; the sequence is EPYRLRRVTSFLDPWADPFGSGYQLTQSLMAFGRGGFFGQGLGNSVQKLSYLPEAHTD. Residues 268-288 traverse the membrane as a helical segment; it reads FVFAILGEELGYFGVLVVLFL. Residues 289–316 lie on the Cytoplasmic side of the membrane; that stretch reads QLLLAMKALQIGRTALLRSKFFEGYMAC. Residues 317–337 form a helical membrane-spanning segment; that stretch reads GIGIWFSFQTVVNVGAAAGML. Topologically, residues 338 to 343 are periplasmic; it reads PTKGLT. A helical transmembrane segment spans residues 344–364; the sequence is LPLVSYGGSSLIAITMAVAIL. Topologically, residues 365-384 are cytoplasmic; that stretch reads LRIDFERRLDTSHVIQREAA.

This sequence belongs to the SEDS family. FtsW subfamily.

The protein resides in the cell inner membrane. It catalyses the reaction [GlcNAc-(1-&gt;4)-Mur2Ac(oyl-L-Ala-gamma-D-Glu-L-Lys-D-Ala-D-Ala)](n)-di-trans,octa-cis-undecaprenyl diphosphate + beta-D-GlcNAc-(1-&gt;4)-Mur2Ac(oyl-L-Ala-gamma-D-Glu-L-Lys-D-Ala-D-Ala)-di-trans,octa-cis-undecaprenyl diphosphate = [GlcNAc-(1-&gt;4)-Mur2Ac(oyl-L-Ala-gamma-D-Glu-L-Lys-D-Ala-D-Ala)](n+1)-di-trans,octa-cis-undecaprenyl diphosphate + di-trans,octa-cis-undecaprenyl diphosphate + H(+). It functions in the pathway cell wall biogenesis; peptidoglycan biosynthesis. Peptidoglycan polymerase that is essential for cell division. The protein is Probable peptidoglycan glycosyltransferase FtsW of Tolumonas auensis (strain DSM 9187 / NBRC 110442 / TA 4).